Here is a 475-residue protein sequence, read N- to C-terminus: Ribulose bisphosphate carboxylase large chain (475 aa).

Positions 1-2 are excised as a propeptide; that stretch reads MS. P3 carries the post-translational modification N-acetylproline. At K14 the chain carries N6,N6,N6-trimethyllysine. Residues N123 and T173 each contribute to the substrate site. K175 acts as the Proton acceptor in catalysis. K177 lines the substrate pocket. 3 residues coordinate Mg(2+): K201, D203, and E204. Position 201 is an N6-carboxylysine (K201). H294 (proton acceptor) is an active-site residue. Residues R295, H327, and S379 each coordinate substrate.

The protein belongs to the RuBisCO large chain family. Type I subfamily. In terms of assembly, heterohexadecamer of 8 large chains and 8 small chains; disulfide-linked. The disulfide link is formed within the large subunit homodimers. Requires Mg(2+) as cofactor. The disulfide bond which can form in the large chain dimeric partners within the hexadecamer appears to be associated with oxidative stress and protein turnover.

It is found in the plastid. It localises to the chloroplast. It carries out the reaction 2 (2R)-3-phosphoglycerate + 2 H(+) = D-ribulose 1,5-bisphosphate + CO2 + H2O. The enzyme catalyses D-ribulose 1,5-bisphosphate + O2 = 2-phosphoglycolate + (2R)-3-phosphoglycerate + 2 H(+). Functionally, ruBisCO catalyzes two reactions: the carboxylation of D-ribulose 1,5-bisphosphate, the primary event in carbon dioxide fixation, as well as the oxidative fragmentation of the pentose substrate in the photorespiration process. Both reactions occur simultaneously and in competition at the same active site. The protein is Ribulose bisphosphate carboxylase large chain of Chloranthus spicatus (Chulantree).